The chain runs to 136 residues: Small ribosomal subunit protein uS19 (136 aa).

The protein belongs to the universal ribosomal protein uS19 family.

In terms of biological role, protein S19 forms a complex with S13 that binds strongly to the 16S ribosomal RNA. This chain is Small ribosomal subunit protein uS19, found in Methanothrix thermoacetophila (strain DSM 6194 / JCM 14653 / NBRC 101360 / PT) (Methanosaeta thermophila).